The sequence spans 293 residues: Serine/threonine-protein phosphatase 2A catalytic subunit beta isoform (293 aa).

Residues Asp41, His43, Asp69, and Asn101 each coordinate Mn(2+). Catalysis depends on His102, which acts as the Proton donor. Mn(2+) contacts are provided by His151 and His225. Tyr291 bears the Phosphotyrosine mark. Position 293 is a leucine methyl ester (Leu293).

It belongs to the PPP phosphatase family. PP-1 subfamily. In terms of assembly, found in a complex with at least ARL2, PPP2CB, PPP2R1A, PPP2R2A, PPP2R5E and TBCD. Interacts with TBCD. PP2A consists of a common heterodimeric core enzyme (composed of a 36 kDa catalytic subunit (subunit C) and a 65 kDa constant regulatory subunit (PR65) (subunit A)) that associates with a variety of regulatory subunits. Proteins that associate with the core dimer include three families of regulatory subunits B (the R2/B/PR55/B55, R3/B''/PR72/PR130/PR59 and R5/B'/B56 families), the 48 kDa variable regulatory subunit, viral proteins, and cell signaling molecules. Binds PPME1. May indirectly interact with SGO1, most probably through regulatory B56 subunits. Interacts with CTTNBP2NL. Interacts with PTPA. Part of the core of STRIPAK complexes composed of PP2A catalytic and scaffolding subunits, the striatins (PP2A regulatory subunits), the striatin-associated proteins MOB4, STRIP1 and STRIP2, PDCD10 and members of the STE20 kinases, such as STK24 and STK26. The cofactor is Mn(2+). Reversibly methyl esterified on Leu-293 by leucine carboxyl methyltransferase 1 (Lcmt1) and protein phosphatase methylesterase 1 (PPME1). Carboxyl methylation influences the affinity of the catalytic subunit for the different regulatory subunits, thereby modulating the PP2A holoenzyme's substrate specificity, enzyme activity and cellular localization. In terms of processing, phosphorylation of either threonine (by autophosphorylation-activated protein kinase) or tyrosine results in inactivation of the phosphatase. Auto-dephosphorylation has been suggested as a mechanism for reactivation. Post-translationally, may be monoubiquitinated by NOSIP.

The protein localises to the cytoplasm. The protein resides in the nucleus. It localises to the chromosome. Its subcellular location is the centromere. It is found in the cytoskeleton. The protein localises to the spindle pole. The catalysed reaction is O-phospho-L-seryl-[protein] + H2O = L-seryl-[protein] + phosphate. The enzyme catalyses O-phospho-L-threonyl-[protein] + H2O = L-threonyl-[protein] + phosphate. Functionally, catalytic subunit of protein phosphatase 2A (PP2A), a serine/threonine phosphatase involved in the regulation of a wide variety of enzymes, signal transduction pathways, and cellular events. PP2A can modulate the activity of phosphorylase B kinase, casein kinase 2, mitogen-stimulated S6 kinase, and MAP-2 kinase. Part of the striatin-interacting phosphatase and kinase (STRIPAK) complexes. STRIPAK complexes have critical roles in protein (de)phosphorylation and are regulators of multiple signaling pathways including Hippo, MAPK, nuclear receptor and cytoskeleton remodeling. Different types of STRIPAK complexes are involved in a variety of biological processes such as cell growth, differentiation, apoptosis, metabolism and immune regulation. This chain is Serine/threonine-protein phosphatase 2A catalytic subunit beta isoform (PPP2CB), found in Sus scrofa (Pig).